Consider the following 376-residue polypeptide: Protein XRP2 (376 aa).

The segment at 1 to 55 (MGCFFSKKSRRKSPKKDAALPTGDESATGNDLAETNNTALGSNSNQEAPKQYSWD) is disordered. A lipid anchor (N-myristoyl glycine) is attached at Gly-2. Residue Cys-3 is the site of S-palmitoyl cysteine attachment. Over residues 25-48 (ESATGNDLAETNNTALGSNSNQEA) the composition is skewed to polar residues. The 156-residue stretch at 49-204 (PKQYSWDKRE…NWSNIHDFTP (156 aa)) folds into the C-CAP/cofactor C-like domain. GTP is bound by residues 123–124 (GS) and 140–143 (QQFR).

It belongs to the TBCC family. In terms of processing, myristoylated on Gly-2; which may be required for membrane targeting. Post-translationally, palmitoylated on Cys-3; which may be required for plasma membrane targeting. In terms of tissue distribution, in the retina, detected in both rod and cone photoreceptors (at protein level). Has strongest expression in the retinal outer nuclear layer (ONL) and weaker expression in the outer plexiform layer (OPL) and inner plexiform layer (IPL) (at protein level). Expressed in all tissues tested.

Its subcellular location is the cell membrane. The protein localises to the cell projection. It is found in the cilium. Acts as a GTPase-activating protein (GAP) involved in trafficking between the Golgi and the ciliary membrane. Acts as a GTPase-activating protein (GAP) for tubulin in concert with tubulin-specific chaperone C, but does not enhance tubulin heterodimerization. In the retina, required for maintenance of rod and cone photoreceptor cells. May have a role in normal retinal localization of the transducins GNB1 and GNAT1, and the rhodopsin kinase GRK1. This Danio rerio (Zebrafish) protein is Protein XRP2.